The primary structure comprises 247 residues: tRNA pseudouridine synthase A (247 aa).

The active-site Nucleophile is the D52. Y113 lines the substrate pocket.

Belongs to the tRNA pseudouridine synthase TruA family. As to quaternary structure, homodimer.

It catalyses the reaction uridine(38/39/40) in tRNA = pseudouridine(38/39/40) in tRNA. Formation of pseudouridine at positions 38, 39 and 40 in the anticodon stem and loop of transfer RNAs. In Bartonella tribocorum (strain CIP 105476 / IBS 506), this protein is tRNA pseudouridine synthase A.